A 199-amino-acid chain; its full sequence is Molybdenum cofactor guanylyltransferase (199 aa).

Residues 12-14 (LAG), Lys-25, Asn-53, Asp-71, and Asp-101 contribute to the GTP site. A Mg(2+)-binding site is contributed by Asp-101.

This sequence belongs to the MobA family. In terms of assembly, monomer. It depends on Mg(2+) as a cofactor.

The protein localises to the cytoplasm. It carries out the reaction Mo-molybdopterin + GTP + H(+) = Mo-molybdopterin guanine dinucleotide + diphosphate. Its function is as follows. Transfers a GMP moiety from GTP to Mo-molybdopterin (Mo-MPT) cofactor (Moco or molybdenum cofactor) to form Mo-molybdopterin guanine dinucleotide (Mo-MGD) cofactor. The polypeptide is Molybdenum cofactor guanylyltransferase (Cupriavidus taiwanensis (strain DSM 17343 / BCRC 17206 / CCUG 44338 / CIP 107171 / LMG 19424 / R1) (Ralstonia taiwanensis (strain LMG 19424))).